Here is a 689-residue protein sequence, read N- to C-terminus: Potassium-transporting ATPase ATP-binding subunit (689 aa).

Transmembrane regions (helical) follow at residues 35–55, 62–82, 220–240, and 260–280; these read VMFV…AILA, AAFT…ANFA, ALTI…ATLF, and VLVA…LSAI. The active-site 4-aspartylphosphate intermediate is aspartate 313. ATP contacts are provided by residues aspartate 350, glutamate 354, 383–390, and lysine 401; that span reads FSAQTRMS. Aspartate 524 and aspartate 528 together coordinate Mg(2+). The next 3 membrane-spanning stretches (helical) occupy residues 594–614, 622–642, and 665–685; these read FAII…LNVM, AIMS…PLAL, and VGGL…LVAL.

It belongs to the cation transport ATPase (P-type) (TC 3.A.3) family. Type IA subfamily. In terms of assembly, the system is composed of three essential subunits: KdpA, KdpB and KdpC.

Its subcellular location is the cell inner membrane. It carries out the reaction K(+)(out) + ATP + H2O = K(+)(in) + ADP + phosphate + H(+). Functionally, part of the high-affinity ATP-driven potassium transport (or Kdp) system, which catalyzes the hydrolysis of ATP coupled with the electrogenic transport of potassium into the cytoplasm. This subunit is responsible for energy coupling to the transport system and for the release of the potassium ions to the cytoplasm. This chain is Potassium-transporting ATPase ATP-binding subunit, found in Serratia proteamaculans (strain 568).